The primary structure comprises 356 residues: tRNA N6-adenosine threonylcarbamoyltransferase (356 aa).

Residues H115 and H119 each coordinate Fe cation. Residues 138–142, D171, G184, and N283 each bind substrate; that span reads LVSGG. A Fe cation-binding site is contributed by D311.

This sequence belongs to the KAE1 / TsaD family. The cofactor is Fe(2+).

It localises to the cytoplasm. It carries out the reaction L-threonylcarbamoyladenylate + adenosine(37) in tRNA = N(6)-L-threonylcarbamoyladenosine(37) in tRNA + AMP + H(+). In terms of biological role, required for the formation of a threonylcarbamoyl group on adenosine at position 37 (t(6)A37) in tRNAs that read codons beginning with adenine. Is involved in the transfer of the threonylcarbamoyl moiety of threonylcarbamoyl-AMP (TC-AMP) to the N6 group of A37, together with TsaE and TsaB. TsaD likely plays a direct catalytic role in this reaction. The polypeptide is tRNA N6-adenosine threonylcarbamoyltransferase (Prochlorococcus marinus (strain MIT 9312)).